Consider the following 742-residue polypeptide: Phosphoribosylformylglycinamidine synthase subunit PurL (742 aa).

The active site involves His54. ATP-binding residues include Tyr57 and Lys96. Position 98 (Glu98) interacts with Mg(2+). Residues 99–102 (SHNH) and Arg121 contribute to the substrate site. His100 (proton acceptor) is an active-site residue. Residue Asp122 participates in Mg(2+) binding. The substrate site is built by Gly225 and Gln245. Asp273 contacts Mg(2+). A substrate-binding site is contributed by 317 to 319 (ESQ). Gly537 contributes to the ATP binding site. Asn538 serves as a coordination point for Mg(2+). Ser540 serves as a coordination point for substrate.

The protein belongs to the FGAMS family. In terms of assembly, monomer. Part of the FGAM synthase complex composed of 1 PurL, 1 PurQ and 2 PurS subunits.

The protein localises to the cytoplasm. It carries out the reaction N(2)-formyl-N(1)-(5-phospho-beta-D-ribosyl)glycinamide + L-glutamine + ATP + H2O = 2-formamido-N(1)-(5-O-phospho-beta-D-ribosyl)acetamidine + L-glutamate + ADP + phosphate + H(+). The enzyme catalyses L-glutamine + H2O = L-glutamate + NH4(+). It participates in purine metabolism; IMP biosynthesis via de novo pathway; 5-amino-1-(5-phospho-D-ribosyl)imidazole from N(2)-formyl-N(1)-(5-phospho-D-ribosyl)glycinamide: step 1/2. Its function is as follows. Part of the phosphoribosylformylglycinamidine synthase complex involved in the purines biosynthetic pathway. Catalyzes the ATP-dependent conversion of formylglycinamide ribonucleotide (FGAR) and glutamine to yield formylglycinamidine ribonucleotide (FGAM) and glutamate. The FGAM synthase complex is composed of three subunits. PurQ produces an ammonia molecule by converting glutamine to glutamate. PurL transfers the ammonia molecule to FGAR to form FGAM in an ATP-dependent manner. PurS interacts with PurQ and PurL and is thought to assist in the transfer of the ammonia molecule from PurQ to PurL. The protein is Phosphoribosylformylglycinamidine synthase subunit PurL of Bacillus subtilis (strain 168).